The primary structure comprises 98 residues: Small ribosomal subunit protein bS6 (98 aa).

This sequence belongs to the bacterial ribosomal protein bS6 family.

Its function is as follows. Binds together with bS18 to 16S ribosomal RNA. The polypeptide is Small ribosomal subunit protein bS6 (Lacticaseibacillus paracasei (strain ATCC 334 / BCRC 17002 / CCUG 31169 / CIP 107868 / KCTC 3260 / NRRL B-441) (Lactobacillus paracasei)).